The sequence spans 424 residues: Homeobox-containing protein 1 (424 aa).

In terms of domain architecture, HNF-p1 spans 1–30 (MLFTIEQLELIKKLQHTGMSSDQLLKAFGE). The POU-specific atypical domain maps to 103–199 (SQRTPMKEIT…PNKLAAFLAD (97 aa)). The segment at residues 215-291 (QRRERYVFRP…NKRKELRRRS (77 aa)) is a DNA-binding region (homeobox). The interval 291–345 (SAEASAASTSSASSSASSTANHDSVSVSSMSPRDEETSSRNTTPETAISPSPAVS) is disordered. Positions 293–310 (EASAASTSSASSSASSTA) are enriched in low complexity. 2 stretches are compositionally biased toward polar residues: residues 311 to 321 (NHDSVSVSSMS) and 329 to 345 (SRNTTPETAISPSPAVS).

Belongs to the HMBOX1 homeobox family. As to expression, expressed in both AWC neurons. Also expressed in the FLP mechanosensory neurons.

It localises to the nucleus. Functionally, transcriptional repressor which maintains cell fate asymmetry of AWC neurons in adults by repressing the expression of multiple AWC (OFF) genes, including srsx-3 in the AWC (ON) neuron. This chain is Homeobox-containing protein 1, found in Caenorhabditis elegans.